Here is a 566-residue protein sequence, read N- to C-terminus: Osteoclast stimulatory transmembrane protein (566 aa).

Residues 1–51 (MPGHPGAAEQLVKTGWRSWHLGFWKALAPLQAAWDAFSQPVPASCGQLLTQ) are Cytoplasmic-facing. The chain crosses the membrane as a helical span at residues 52–72 (LLLCASLAAAAAGLVYHWLAS). At 73-81 (LLLYPPGPS) the chain is on the extracellular side. The helical transmembrane segment at 82-102 (AMVATVCGLLVFLSLGLVPPV) threads the bilayer. The Cytoplasmic portion of the chain corresponds to 103 to 128 (RCLFALSVPTLGMEQGRRLLLSYSTA). Residues 129–149 (TLAIAVVPNVLANVGAAGQVL) form a helical membrane-spanning segment. Over 150-227 (RCVTEGSLES…ARAAALGTQR (78 aa)) the chain is Extracellular. Residues 228 to 248 (VVTGLFMLGLLVESAWYLHCY) traverse the membrane as a helical segment. At 249 to 304 (LTDLRFDNIYATQQLTQRLAQAQATHLLAPPPTWLLQAAQLRLSQEELLSCLLRLG) the chain is on the cytoplasmic side. The helical transmembrane segment at 305 to 325 (LLALLLVATAVAVATDHVAFL) threads the bilayer. The Extracellular portion of the chain corresponds to 326–398 (LAQATVDWAQ…CPLLPARRPR (73 aa)). A helical transmembrane segment spans residues 399–419 (AAAPLAAGALQLLAGSTVLLE). At 420-566 (AYARRLRHAI…EGNTGHDRPG (147 aa)) the chain is on the cytoplasmic side.

The protein resides in the membrane. Probable cell surface receptor that plays a role in cellular fusion and cell differentiation. Cooperates with DCSTAMP in modulating cell-cell fusion in both osteoclasts and foreign body giant cells (FBGCs). Involved in osteoclast bone resorption. Promotes osteoclast differentiation and may play a role in the multinucleated osteoclast maturation. The sequence is that of Osteoclast stimulatory transmembrane protein (OCSTAMP) from Homo sapiens (Human).